A 440-amino-acid polypeptide reads, in one-letter code: MKLWGGRFKEEESKLMEDFNSSLSFDKKLYYEDIKGSIAHVKMLTNQNIIKEEEKEKILLGLEEILKEIDEGILKIEGDYEDIHSFVEINLINKIGNVGKKLHTGRSRNDQVALDMKLYAKKSTEEVIECLKELMDSLIKVGNENNYIMPGYTHLQRAQVVTFRYHLLAYFEMFKRDEKRLENALEILNESPLGSGALAGSTYNIDREYTAKLLGFRKPVDNFLDGVSDRDYIIELISKFSIIMMHLSRLSEELILWSSSEFRFIQIGDAYSTGSSIMPQKKNPDGAELIRGKIGRVYGDLISILTVMKSLPLAYNKDMQEDKEPFFDAKDTVISCLKVMEGIISTLKVNKENLMKSVKKGFLNATEAADYLVNKGMAFRDAHKVIGEVVIYCEDKNSAIEDLSLEELKQFSDLFCEDIYEFIDYKNSINKGIKKEMGYF.

Belongs to the lyase 1 family. Argininosuccinate lyase subfamily.

It localises to the cytoplasm. The enzyme catalyses 2-(N(omega)-L-arginino)succinate = fumarate + L-arginine. It participates in amino-acid biosynthesis; L-arginine biosynthesis; L-arginine from L-ornithine and carbamoyl phosphate: step 3/3. In Clostridium botulinum (strain Kyoto / Type A2), this protein is Argininosuccinate lyase.